A 628-amino-acid polypeptide reads, in one-letter code: tRNA uridine 5-carboxymethylaminomethyl modification enzyme MnmG (628 aa).

Residues 14–19, V126, and S181 each bind FAD; that span reads GAGHAG. Position 273–287 (273–287) interacts with NAD(+); that stretch reads GPRYCPSIEDKVVRF. Q370 contributes to the FAD binding site.

This sequence belongs to the MnmG family. In terms of assembly, homodimer. Heterotetramer of two MnmE and two MnmG subunits. FAD serves as cofactor.

Its subcellular location is the cytoplasm. Its function is as follows. NAD-binding protein involved in the addition of a carboxymethylaminomethyl (cmnm) group at the wobble position (U34) of certain tRNAs, forming tRNA-cmnm(5)s(2)U34. The protein is tRNA uridine 5-carboxymethylaminomethyl modification enzyme MnmG of Bacillus licheniformis (strain ATCC 14580 / DSM 13 / JCM 2505 / CCUG 7422 / NBRC 12200 / NCIMB 9375 / NCTC 10341 / NRRL NRS-1264 / Gibson 46).